The chain runs to 350 residues: Galactokinase (350 aa).

A substrate-binding site is contributed by 14-17; it reads EHTD. ATP is bound by residues serine 46 and 96–102; that span reads GAGLSSS. Residues serine 102 and glutamate 134 each coordinate Mg(2+). Aspartate 146 serves as the catalytic Proton acceptor. Tyrosine 196 is a substrate binding site.

Belongs to the GHMP kinase family. GalK subfamily.

It localises to the cytoplasm. It catalyses the reaction alpha-D-galactose + ATP = alpha-D-galactose 1-phosphate + ADP + H(+). It participates in carbohydrate metabolism; galactose metabolism. In terms of biological role, catalyzes the transfer of the gamma-phosphate of ATP to D-galactose to form alpha-D-galactose-1-phosphate (Gal-1-P). The sequence is that of Galactokinase from Thermotoga petrophila (strain ATCC BAA-488 / DSM 13995 / JCM 10881 / RKU-1).